The sequence spans 167 residues: Xanthine-guanine phosphoribosyltransferase (167 aa).

5-phospho-alpha-D-ribose 1-diphosphate-binding positions include 47–48 (RG), Gln79, and 102–110 (DDLVDSGKT). Gln79 serves as a coordination point for GMP. Asp103 lines the Mg(2+) pocket. Residues Asp106 and Ile149 each contribute to the guanine site. Xanthine contacts are provided by Asp106 and Ile149. Residues 106-110 (DSGKT) and 148-149 (WI) contribute to the GMP site.

It belongs to the purine/pyrimidine phosphoribosyltransferase family. XGPT subfamily. Homotetramer. Requires Mg(2+) as cofactor.

It localises to the cell inner membrane. It catalyses the reaction GMP + diphosphate = guanine + 5-phospho-alpha-D-ribose 1-diphosphate. It carries out the reaction XMP + diphosphate = xanthine + 5-phospho-alpha-D-ribose 1-diphosphate. The enzyme catalyses IMP + diphosphate = hypoxanthine + 5-phospho-alpha-D-ribose 1-diphosphate. It participates in purine metabolism; GMP biosynthesis via salvage pathway; GMP from guanine: step 1/1. It functions in the pathway purine metabolism; XMP biosynthesis via salvage pathway; XMP from xanthine: step 1/1. Functionally, purine salvage pathway enzyme that catalyzes the transfer of the ribosyl-5-phosphate group from 5-phospho-alpha-D-ribose 1-diphosphate (PRPP) to the N9 position of the 6-oxopurines guanine and xanthine to form the corresponding ribonucleotides GMP (guanosine 5'-monophosphate) and XMP (xanthosine 5'-monophosphate), with the release of PPi. To a lesser extent, also acts on hypoxanthine. The protein is Xanthine-guanine phosphoribosyltransferase of Cereibacter sphaeroides (strain ATCC 17025 / ATH 2.4.3) (Rhodobacter sphaeroides).